The following is a 985-amino-acid chain: Rho guanine nucleotide exchange factor 2 (985 aa).

Positions 1–32 are disordered; sequence MSRIESLTRARIDRSKEQATKTREKEKMKEAK. The Phorbol-ester/DAG-type zinc finger occupies 39 to 86; sequence GHLFTTISVSGMTMCYACNKSITAKEALICPTCNVTIHNRCKDTLANC. Phosphoserine is present on residues Ser-109, Ser-122, Ser-129, Ser-133, and Ser-137. The interval 131 to 161 is interaction with DYNLT1; it reads RQSLLGSRRGLSSLSLAKSVSTTNIAGHFND. Ser-143 is subject to Phosphoserine; by PAK4. Ser-151, Ser-163, Ser-172, Ser-174, and Ser-177 each carry phosphoserine. The DH domain maps to 236–433; it reads KKQDVIYELI…KELLSNVDQD (198 aa). The residue at position 354 (Lys-354) is an N6-acetyllysine. In terms of domain architecture, PH spans 473 to 572; the sequence is KLIHEGCLLW…WIRVIQQSVR (100 aa). Positions 591–619 form a coiled coil; that stretch reads LRRIKTKLQQKNQALVELLQKNVELFAEM. A phosphoserine mark is found at Ser-646 and Ser-649. Thr-680 carries the phosphothreonine; by MAPK1 or MAPK3 modification. Phosphoserine occurs at positions 692, 710, and 781. Thr-795 is subject to Phosphothreonine. A coiled-coil region spans residues 797-866; the sequence is EKQATELALL…RQLAALGQNE (70 aa). Ser-885 bears the Phosphoserine mark. 2 disordered regions span residues 890 to 909 and 918 to 985; these read DALY…DRLD and HRPF…ASES. Tyr-893 is modified (phosphotyrosine). Ser-895 carries the post-translational modification Phosphoserine; by PAK4. Basic and acidic residues predominate over residues 919–938; sequence RPFDDREAQELGSPEDRLQD. Residues Ser-931, Ser-939, and Ser-940 each carry the phosphoserine modification. Over residues 940 to 949 the composition is skewed to acidic residues; that stretch reads SDPDTGSEEE. Residue Thr-944 is modified to Phosphothreonine. Ser-946, Ser-951, Ser-952, Ser-955, and Ser-959 each carry phosphoserine.

Found in a complex composed at least of ARHGEF2, NOD2 and RIPK2. Interacts with RIPK2; the interaction mediates tyrosine phosphorylation of RIPK2 by Src kinase CSK. Interacts with RIPK1 and RIPK3. Interacts with YWHAZ/14-3-3 zeta; when phosphorylated at Ser-885. Interacts with the kinases PAK4, AURKA and MAPK1. Interacts with RHOA and RAC1. Interacts with NOD1. Interacts (via the N- terminal zinc finger) with CAPN6 (via domain II). Interacts with DYNLT1. Phosphorylation of Ser-885 by PAK1 induces binding to protein YWHAZ, promoting its relocation to microtubules and the inhibition of its activity. Phosphorylated by AURKA and CDK1 during mitosis, which negatively regulates its activity. Phosphorylation by MAPK1 or MAPK3 increases nucleotide exchange activity. Phosphorylation by PAK4 releases GEF-H1 from the microtubules. Phosphorylated on serine, threonine and tyrosine residues in a RIPK2-dependent manner. As to expression, ubiquitous, with the exception of liver tissue. Levels are high in hemopoietic tissues (thymus, spleen, bone marrow) as well as in kidney and lung. Expressed in the germinal zones of both the neocortex and the cerebellum and in the pontine gray nuclei.

Its subcellular location is the cytoplasm. The protein resides in the cytoskeleton. The protein localises to the cell junction. It localises to the tight junction. It is found in the golgi apparatus. Its subcellular location is the spindle. The protein resides in the cytoplasmic vesicle. In terms of biological role, activates Rho-GTPases by promoting the exchange of GDP for GTP. May be involved in epithelial barrier permeability, cell motility and polarization, dendritic spine morphology, antigen presentation, leukemic cell differentiation, cell cycle regulation, innate immune response, and cancer. Binds Rac-GTPases, but does not seem to promote nucleotide exchange activity toward Rac-GTPases. May stimulate instead the cortical activity of Rac. Inactive toward CDC42, TC10, or Ras-GTPases. Forms an intracellular sensing system along with NOD1 for the detection of microbial effectors during cell invasion by pathogens. Involved in innate immune signaling transduction pathway promoting cytokine IL6/interleukin-6 and TNF-alpha secretion in macrophage upon stimulation by bacterial peptidoglycans; acts as a signaling intermediate between NOD2 receptor and RIPK2 kinase. Contributes to the tyrosine phosphorylation of RIPK2 through Src tyrosine kinase leading to NF-kappaB activation by NOD2. Overexpression activates Rho-, but not Rac-GTPases, and increases paracellular permeability. Involved in neuronal progenitor cell division and differentiation. Involved in the migration of precerebellar neurons. This chain is Rho guanine nucleotide exchange factor 2 (Arhgef2), found in Mus musculus (Mouse).